The primary structure comprises 258 residues: Imidazole glycerol phosphate synthase subunit HisF (258 aa).

Active-site residues include Asp11 and Asp130.

Belongs to the HisA/HisF family. In terms of assembly, heterodimer of HisH and HisF.

It is found in the cytoplasm. The enzyme catalyses 5-[(5-phospho-1-deoxy-D-ribulos-1-ylimino)methylamino]-1-(5-phospho-beta-D-ribosyl)imidazole-4-carboxamide + L-glutamine = D-erythro-1-(imidazol-4-yl)glycerol 3-phosphate + 5-amino-1-(5-phospho-beta-D-ribosyl)imidazole-4-carboxamide + L-glutamate + H(+). Its pathway is amino-acid biosynthesis; L-histidine biosynthesis; L-histidine from 5-phospho-alpha-D-ribose 1-diphosphate: step 5/9. IGPS catalyzes the conversion of PRFAR and glutamine to IGP, AICAR and glutamate. The HisF subunit catalyzes the cyclization activity that produces IGP and AICAR from PRFAR using the ammonia provided by the HisH subunit. In Methylorubrum extorquens (strain CM4 / NCIMB 13688) (Methylobacterium extorquens), this protein is Imidazole glycerol phosphate synthase subunit HisF.